Reading from the N-terminus, the 231-residue chain is Cytochrome c oxidase subunit 2 (231 aa).

At 1–30 (MNNFFQGYNLLFQHSLFASYMDWFHSFNCS) the chain is on the mitochondrial intermembrane side. The chain crosses the membrane as a helical span at residues 31-52 (LLLGVLVFVTLLFGYLIFGTFY). Residues 53 to 69 (FKSKKIEYQFGELLCSI) are Mitochondrial matrix-facing. A helical transmembrane segment spans residues 70 to 89 (FPTIILLMQMVPSLSLLYYY). Topologically, residues 90–231 (GLMNLDSNLT…FKSWCFGTME (142 aa)) are mitochondrial intermembrane. Cu cation is bound by residues His164, Cys199, Glu201, Cys203, His207, and Met210. A Mg(2+)-binding site is contributed by Glu201.

This sequence belongs to the cytochrome c oxidase subunit 2 family. As to quaternary structure, component of the cytochrome c oxidase (complex IV, CIV), a multisubunit enzyme composed of a catalytic core of 3 subunits and several supernumerary subunits. The complex exists as a monomer or a dimer and forms supercomplexes (SCs) in the inner mitochondrial membrane with ubiquinol-cytochrome c oxidoreductase (cytochrome b-c1 complex, complex III, CIII). Cu cation is required as a cofactor.

The protein localises to the mitochondrion inner membrane. It catalyses the reaction 4 Fe(II)-[cytochrome c] + O2 + 8 H(+)(in) = 4 Fe(III)-[cytochrome c] + 2 H2O + 4 H(+)(out). Functionally, component of the cytochrome c oxidase, the last enzyme in the mitochondrial electron transport chain which drives oxidative phosphorylation. The respiratory chain contains 3 multisubunit complexes succinate dehydrogenase (complex II, CII), ubiquinol-cytochrome c oxidoreductase (cytochrome b-c1 complex, complex III, CIII) and cytochrome c oxidase (complex IV, CIV), that cooperate to transfer electrons derived from NADH and succinate to molecular oxygen, creating an electrochemical gradient over the inner membrane that drives transmembrane transport and the ATP synthase. Cytochrome c oxidase is the component of the respiratory chain that catalyzes the reduction of oxygen to water. Electrons originating from reduced cytochrome c in the intermembrane space (IMS) are transferred via the dinuclear copper A center (CU(A)) of subunit 2 and heme A of subunit 1 to the active site in subunit 1, a binuclear center (BNC) formed by heme A3 and copper B (CU(B)). The BNC reduces molecular oxygen to 2 water molecules using 4 electrons from cytochrome c in the IMS and 4 protons from the mitochondrial matrix. This chain is Cytochrome c oxidase subunit 2, found in Caenorhabditis elegans.